We begin with the raw amino-acid sequence, 149 residues long: Transcriptional repressor NrdR (149 aa).

A zinc finger spans residues 3–34; it reads CPFCAAVDTKVIDSRLVSDGSQVRRRRQCLDC. Residues 49-139 enclose the ATP-cone domain; sequence PRVIKSDEVR…VYRSFEDVRE (91 aa).

Belongs to the NrdR family. Zn(2+) serves as cofactor.

Its function is as follows. Negatively regulates transcription of bacterial ribonucleotide reductase nrd genes and operons by binding to NrdR-boxes. The sequence is that of Transcriptional repressor NrdR from Yersinia pseudotuberculosis serotype O:1b (strain IP 31758).